We begin with the raw amino-acid sequence, 1588 residues long: Paternally-expressed gene 3 protein (1588 aa).

One can recognise an SCAN box domain in the interval 46-128 (HQRFRNLIYV…TLLENYKEMY (83 aa)). 3 disordered regions span residues 128–230 (YQPE…ESYQ), 266–306 (DGHS…RRGI), and 319–349 (KFIKDVSRSSKSGRARESSDRSQRFPRMSDD). The segment covering 129–142 (QPEDDNNSDVTSDD) has biased composition (acidic residues). Basic and acidic residues-rich tracts occupy residues 143-152 (DMTRNRRESS), 161-182 (SGDRDWDRRGRSRDMEPRDRWS), 206-225 (FEMDRDDDRDSRAYESRSQD), and 295-306 (PEAKKSTHRRGI). 3 consecutive C2H2-type zinc fingers follow at residues 454–476 (YVCDECGRSFSVISEFVEHQIMH), 507–529 (FECKDCGETFNKSAALAEHRKIH), and 565–587 (YECRVCKETFLHSSALIEHQKIH). A compositionally biased stretch (basic and acidic residues) spans 588–607 (FGDDKDNEREHERERERGET). Positions 588-610 (FGDDKDNEREHERERERGETFRP) are disordered. The segment at 627 to 649 (YECKVCGETFLHSSSLKEHQKIH) adopts a C2H2-type 4 zinc-finger fold. A disordered region spans residues 838 to 930 (LVASKPPRSH…EFSVPSSNVR (93 aa)). The span at 868–881 (LNDKRQKIPARENP) shows a compositional bias: basic and acidic residues. Residues 969–991 (YECQECGECFAHSSDLTEHQKIH) form a C2H2-type 5 zinc finger. The interval 1056 to 1104 (EKSHGEESQGENTDGEETHSEETHGQETIEDPVIQGSDMEDPQKDDPDD) is disordered. The segment covering 1071–1082 (EETHSEETHGQE) has biased composition (basic and acidic residues). 5 C2H2-type zinc fingers span residues 1107–1129 (YECEDCGLGFVDLTDLTDHQKVH), 1163–1185 (YECPKCGESFIHSSFLFEHQRIH), 1225–1247 (IRCLLCGQGFIHSSALNEHMRLH), 1282–1304 (FECAVCGESFINPAELADHVTVH), and 1332–1354 (YECKDCGKSFIHSTVLTKHKELH). Residues 1395 to 1415 (AEPEVEAAEPEVEAAEPEVEA) are compositionally biased toward acidic residues. The tract at residues 1395–1495 (AEPEVEAAEP…GIEDPEEGED (101 aa)) is disordered. A run of 7 repeats spans residues 1397–1403 (PEVEAAE), 1404–1410 (PEVEAAE), 1411–1417 (PEVEAAE), 1418–1422 (PNGEA), 1425–1429 (PDGEA), 1432–1436 (PIGEA), and 1439–1443 (PNGEA). The segment at 1397 to 1417 (PEVEAAEPEVEAAEPEVEAAE) is 3 X 7 AA repeat of P-E-V-E-A-A-E. The tract at residues 1418–1443 (PNGEAEGPDGEAAEPIGEAGQPNGEA) is 4 X 5 AA repeat of P-X-G-E-A. Acidic residues-rich tracts occupy residues 1449 to 1466 (DADEPDGAGIEDPEERAE) and 1475 to 1495 (PEGDADEPDGVGIEDPEEGED). 2 C2H2-type zinc fingers span residues 1505 to 1527 (YDCHECTETFTSSTAFGEHLKTH) and 1564 to 1586 (FKCDVCGQLFNDRLSLARHQNTH).

This sequence belongs to the krueppel C2H2-type zinc-finger protein family. In terms of assembly, homodimer. Interacts with SIAH1A and SIAH2. Interacts with TRAF2.

The protein resides in the nucleus. The protein localises to the cytoplasm. In terms of biological role, induces apoptosis in cooperation with SIAH1A. Acts as a mediator between p53/TP53 and BAX in a neuronal death pathway that is activated by DNA damage. Acts synergistically with TRAF2 and inhibits TNF induced apoptosis through activation of NF-kappa-B. The protein is Paternally-expressed gene 3 protein (PEG3) of Pan troglodytes (Chimpanzee).